The following is a 485-amino-acid chain: uncharacterized protein (485 aa).

The Cytoplasmic segment spans residues 1 to 30; the sequence is MFSWANIGSNEYLPLKNDRKAYLNQWAKRS. Residues 31–51 traverse the membrane as a helical segment; it reads GLAIAAICILGILILAIVKLF. At 52-485 the chain is on the extracellular side; sequence CFKAIIFPIV…DIEQAYSKLI (434 aa). Asn-67 is a glycosylation site (N-linked (GlcNAc...) asparagine). Residues 74 to 404 are phosphodiesterase; sequence STVIVISLDG…YEPLGVHGYD (331 aa). The active-site Nucleophile is Thr-118. N-linked (GlcNAc...) asparagine glycosylation is found at Asn-306, Asn-338, Asn-453, and Asn-467.

The protein belongs to the nucleotide pyrophosphatase/phosphodiesterase family.

The protein localises to the membrane. This is an uncharacterized protein from Schizosaccharomyces pombe (strain 972 / ATCC 24843) (Fission yeast).